The chain runs to 117 residues: Protein Wnt-6 (117 aa).

The O-palmitoleoyl serine; by PORCN moiety is linked to residue S1. C83 and C98 are oxidised to a cystine. N-linked (GlcNAc...) asparagine glycosylation occurs at N84.

It belongs to the Wnt family. In terms of processing, palmitoleoylation is required for efficient binding to frizzled receptors. Depalmitoleoylation leads to Wnt signaling pathway inhibition.

It is found in the secreted. The protein localises to the extracellular space. The protein resides in the extracellular matrix. Its function is as follows. Ligand for members of the frizzled family of seven transmembrane receptors. Probable developmental protein. May be a signaling molecule which affects the development of discrete regions of tissues. Is likely to signal over only few cell diameters. This is Protein Wnt-6 (wnt6) from Thunnus thynnus (Atlantic bluefin tuna).